We begin with the raw amino-acid sequence, 60 residues long: Ferredoxin-1 (60 aa).

2 consecutive 4Fe-4S ferredoxin-type domains span residues 2 to 27 (LYIT…SAGD) and 28 to 60 (DIYV…IVQG). Residues cysteine 8, cysteine 11, cysteine 14, cysteine 18, cysteine 37, cysteine 40, cysteine 48, and cysteine 52 each contribute to the [4Fe-4S] cluster site.

Requires [4Fe-4S] cluster as cofactor.

In terms of biological role, ferredoxins are iron-sulfur proteins that transfer electrons in a wide variety of metabolic reactions. In Chlorobium limicola, this protein is Ferredoxin-1.